We begin with the raw amino-acid sequence, 146 residues long: Large ribosomal subunit protein uL15 (146 aa).

The segment covering 1-13 (MKLHELKPAEGSR) has biased composition (basic and acidic residues). A disordered region spans residues 1–60 (MKLHELKPAEGSRKQRNRVGRGIGSGNGKTAGKGHKGQNARSGGGVRPGFEGGQNPLFRR). Gly residues-rich tracts occupy residues 21 to 31 (RGIGSGNGKTA) and 42 to 52 (SGGGVRPGFEG).

It belongs to the universal ribosomal protein uL15 family. In terms of assembly, part of the 50S ribosomal subunit.

Binds to the 23S rRNA. The polypeptide is Large ribosomal subunit protein uL15 (Lysinibacillus sphaericus (strain C3-41)).